A 317-amino-acid polypeptide reads, in one-letter code: Glycine--tRNA ligase alpha subunit (317 aa).

It belongs to the class-II aminoacyl-tRNA synthetase family. Tetramer of two alpha and two beta subunits.

It localises to the cytoplasm. It catalyses the reaction tRNA(Gly) + glycine + ATP = glycyl-tRNA(Gly) + AMP + diphosphate. In Leptothrix cholodnii (strain ATCC 51168 / LMG 8142 / SP-6) (Leptothrix discophora (strain SP-6)), this protein is Glycine--tRNA ligase alpha subunit.